The primary structure comprises 117 residues: Immunoglobulin lambda variable 6-57 (117 aa).

Positions 1-19 (MAWAPLLLTLLAHCTGSWA) are cleaved as a signal peptide. Residues 20–44 (NFMLTQPHSVSESPGKTVTISCTGS) are framework-1. Residues 20-117 (NFMLTQPHSV…YYCQSYDSSN (98 aa)) form the Ig-like domain. Cysteines 41 and 110 form a disulfide. Residues 45 to 52 (SGSIASNY) are complementarity-determining-1. Residues 53–69 (VQWYQQRPGSAPTTVIY) form a framework-2 region. Residues 65-97 (TTVIYEDNQRPSGVPDRFSGSIDSSSNSASLTI) are disordered. The interval 70 to 72 (EDN) is complementarity-determining-2. A framework-3 region spans residues 73 to 110 (QRPSGVPDRFSGSIDSSSNSASLTISGLKTEDEADYYC). Over residues 83-97 (SGSIDSSSNSASLTI) the composition is skewed to low complexity. Residues 111–117 (QSYDSSN) form a complementarity-determining-3 region.

As to quaternary structure, immunoglobulins are composed of two identical heavy chains and two identical light chains; disulfide-linked.

The protein localises to the secreted. It localises to the cell membrane. In terms of biological role, v region of the variable domain of immunoglobulin light chains that participates in the antigen recognition. Immunoglobulins, also known as antibodies, are membrane-bound or secreted glycoproteins produced by B lymphocytes. In the recognition phase of humoral immunity, the membrane-bound immunoglobulins serve as receptors which, upon binding of a specific antigen, trigger the clonal expansion and differentiation of B lymphocytes into immunoglobulins-secreting plasma cells. Secreted immunoglobulins mediate the effector phase of humoral immunity, which results in the elimination of bound antigens. The antigen binding site is formed by the variable domain of one heavy chain, together with that of its associated light chain. Thus, each immunoglobulin has two antigen binding sites with remarkable affinity for a particular antigen. The variable domains are assembled by a process called V-(D)-J rearrangement and can then be subjected to somatic hypermutations which, after exposure to antigen and selection, allow affinity maturation for a particular antigen. This is Immunoglobulin lambda variable 6-57 from Homo sapiens (Human).